Reading from the N-terminus, the 342-residue chain is Phenylalanine--tRNA ligase alpha subunit (342 aa).

Glutamate 260 is a binding site for Mg(2+).

It belongs to the class-II aminoacyl-tRNA synthetase family. Phe-tRNA synthetase alpha subunit type 1 subfamily. Tetramer of two alpha and two beta subunits. The cofactor is Mg(2+).

The protein resides in the cytoplasm. It carries out the reaction tRNA(Phe) + L-phenylalanine + ATP = L-phenylalanyl-tRNA(Phe) + AMP + diphosphate + H(+). In Nocardia farcinica (strain IFM 10152), this protein is Phenylalanine--tRNA ligase alpha subunit.